A 212-amino-acid polypeptide reads, in one-letter code: Lipopolysaccharide core heptose(II)-phosphate phosphatase (212 aa).

A signal peptide spans 1 to 32 (MSIGGVYELAFCRSSLKSKKYFIILLALAAIA).

This sequence belongs to the phosphoglycerate mutase family. Ais subfamily.

It is found in the periplasm. It participates in bacterial outer membrane biogenesis; lipopolysaccharide metabolism. Catalyzes the dephosphorylation of heptose(II) of the outer membrane lipopolysaccharide core. The chain is Lipopolysaccharide core heptose(II)-phosphate phosphatase from Shigella boydii serotype 4 (strain Sb227).